Consider the following 200-residue polypeptide: uncharacterized protein (200 aa).

Disordered stretches follow at residues 1–27 (MTDTRREQEKDERRKLQEQSRQNEAET), 42–79 (IPKEAKGNEPLLENYKSGLQETRKELETTPDATKSTNA), and 169–200 (HGRAGIVRNPQAAQHQRQRQMEKTGAGREHGR). Positions 187-200 (RQMEKTGAGREHGR) are enriched in basic and acidic residues.

This is an uncharacterized protein from Shigella flexneri.